The following is a 212-amino-acid chain: Large ribosomal subunit protein uL4 (212 aa).

The protein belongs to the universal ribosomal protein uL4 family. Part of the 50S ribosomal subunit.

Its function is as follows. One of the primary rRNA binding proteins, this protein initially binds near the 5'-end of the 23S rRNA. It is important during the early stages of 50S assembly. It makes multiple contacts with different domains of the 23S rRNA in the assembled 50S subunit and ribosome. Forms part of the polypeptide exit tunnel. This chain is Large ribosomal subunit protein uL4, found in Caulobacter sp. (strain K31).